The primary structure comprises 339 residues: MRVYYDRDADVNLIKSKKVAIIGYGSQGHAHANNLKDSGVTDMVIGLRPGSSAVAKAEAAGFKVMGPSEAAAWADVVMVLTPDEGQGALYKEHLEANLKQGAALAFAHGLSIHFRIIEARPDLDVFLIAPKGPGHTVRSEYQRGGGVPSLVAVAQNASGNALEIALSYASANGGGRAGIIETSFKEEVETDLFGEQAVLCGGLVELIRAGFETLVEAGYAPEMAYFECLHETKLIVDLIYEGGIANMNYSISNTAEYGEYATGPRIVTPETKAEMKRVLTDIQDGTFVRNFILENQSGNVGFKAIRARNNAHQIEQVGEKLRGMMPWIGKNKLVDKTRN.

The KARI N-terminal Rossmann domain occupies 1-182; the sequence is MRVYYDRDAD…GGGRAGIIET (182 aa). Residues 24 to 27, arginine 48, serine 51, and 83 to 86 contribute to the NADP(+) site; these read YGSQ and DEGQ. The active site involves histidine 108. Residue glycine 134 participates in NADP(+) binding. The KARI C-terminal knotted domain occupies 183 to 328; it reads SFKEEVETDL…EKLRGMMPWI (146 aa). Positions 191, 195, 227, and 231 each coordinate Mg(2+). Serine 252 serves as a coordination point for substrate.

The protein belongs to the ketol-acid reductoisomerase family. Requires Mg(2+) as cofactor.

It catalyses the reaction (2R)-2,3-dihydroxy-3-methylbutanoate + NADP(+) = (2S)-2-acetolactate + NADPH + H(+). The enzyme catalyses (2R,3R)-2,3-dihydroxy-3-methylpentanoate + NADP(+) = (S)-2-ethyl-2-hydroxy-3-oxobutanoate + NADPH + H(+). Its pathway is amino-acid biosynthesis; L-isoleucine biosynthesis; L-isoleucine from 2-oxobutanoate: step 2/4. The protein operates within amino-acid biosynthesis; L-valine biosynthesis; L-valine from pyruvate: step 2/4. In terms of biological role, involved in the biosynthesis of branched-chain amino acids (BCAA). Catalyzes an alkyl-migration followed by a ketol-acid reduction of (S)-2-acetolactate (S2AL) to yield (R)-2,3-dihydroxy-isovalerate. In the isomerase reaction, S2AL is rearranged via a Mg-dependent methyl migration to produce 3-hydroxy-3-methyl-2-ketobutyrate (HMKB). In the reductase reaction, this 2-ketoacid undergoes a metal-dependent reduction by NADPH to yield (R)-2,3-dihydroxy-isovalerate. In Gluconacetobacter diazotrophicus (strain ATCC 49037 / DSM 5601 / CCUG 37298 / CIP 103539 / LMG 7603 / PAl5), this protein is Ketol-acid reductoisomerase (NADP(+)).